We begin with the raw amino-acid sequence, 331 residues long: Putative phosphoribosylaminoimidazole-succinocarboxamide synthase (331 aa).

This sequence belongs to the SAICAR synthetase family. Highly divergent.

The enzyme catalyses 5-amino-1-(5-phospho-D-ribosyl)imidazole-4-carboxylate + L-aspartate + ATP = (2S)-2-[5-amino-1-(5-phospho-beta-D-ribosyl)imidazole-4-carboxamido]succinate + ADP + phosphate + 2 H(+). It functions in the pathway purine metabolism; IMP biosynthesis via de novo pathway; 5-amino-1-(5-phospho-D-ribosyl)imidazole-4-carboxamide from 5-amino-1-(5-phospho-D-ribosyl)imidazole-4-carboxylate: step 1/2. The chain is Putative phosphoribosylaminoimidazole-succinocarboxamide synthase (purC) from Archaeoglobus fulgidus (strain ATCC 49558 / DSM 4304 / JCM 9628 / NBRC 100126 / VC-16).